The sequence spans 117 residues: Large ribosomal subunit protein uL18 (117 aa).

This sequence belongs to the universal ribosomal protein uL18 family. Part of the 50S ribosomal subunit; part of the 5S rRNA/L5/L18/L25 subcomplex. Contacts the 5S and 23S rRNAs.

Its function is as follows. This is one of the proteins that bind and probably mediate the attachment of the 5S RNA into the large ribosomal subunit, where it forms part of the central protuberance. The chain is Large ribosomal subunit protein uL18 from Actinobacillus succinogenes (strain ATCC 55618 / DSM 22257 / CCUG 43843 / 130Z).